A 618-amino-acid chain; its full sequence is Chaperone protein HscA homolog (618 aa).

Belongs to the heat shock protein 70 family.

Chaperone involved in the maturation of iron-sulfur cluster-containing proteins. Has a low intrinsic ATPase activity which is markedly stimulated by HscB. This chain is Chaperone protein HscA homolog, found in Variovorax paradoxus (strain S110).